The sequence spans 432 residues: Homogentisate 1,2-dioxygenase (432 aa).

Fe cation is bound by residues histidine 333, glutamate 339, and histidine 369.

Belongs to the homogentisate dioxygenase family. Requires Fe cation as cofactor.

It catalyses the reaction homogentisate + O2 = 4-maleylacetoacetate + H(+). The protein operates within amino-acid degradation; L-phenylalanine degradation; acetoacetate and fumarate from L-phenylalanine: step 4/6. The sequence is that of Homogentisate 1,2-dioxygenase (hgd) from Dictyostelium discoideum (Social amoeba).